The sequence spans 194 residues: dTTP/UTP pyrophosphatase (194 aa).

Aspartate 69 serves as the catalytic Proton acceptor.

Belongs to the Maf family. YhdE subfamily. It depends on a divalent metal cation as a cofactor.

The protein resides in the cytoplasm. It catalyses the reaction dTTP + H2O = dTMP + diphosphate + H(+). The enzyme catalyses UTP + H2O = UMP + diphosphate + H(+). In terms of biological role, nucleoside triphosphate pyrophosphatase that hydrolyzes dTTP and UTP. May have a dual role in cell division arrest and in preventing the incorporation of modified nucleotides into cellular nucleic acids. The polypeptide is dTTP/UTP pyrophosphatase (Moorella thermoacetica (strain ATCC 39073 / JCM 9320)).